We begin with the raw amino-acid sequence, 155 residues long: Small ribosomal subunit protein uS7 (155 aa).

Belongs to the universal ribosomal protein uS7 family. Part of the 30S ribosomal subunit. Contacts proteins S9 and S11.

Functionally, one of the primary rRNA binding proteins, it binds directly to 16S rRNA where it nucleates assembly of the head domain of the 30S subunit. Is located at the subunit interface close to the decoding center, probably blocks exit of the E-site tRNA. The protein is Small ribosomal subunit protein uS7 of Thermosipho africanus (strain TCF52B).